The primary structure comprises 652 residues: Starch synthase 1, chloroplastic/amyloplastic (652 aa).

The N-terminal 49 residues, 1–49, are a transit peptide targeting the chloroplast; the sequence is MASLQISGSVKFEPFVGFNRIRHFRPIASLGFPRFRRRFSIGRSLLLRR. Lys-156 contributes to the ADP-alpha-D-glucose binding site.

Belongs to the glycosyltransferase 1 family. Bacterial/plant glycogen synthase subfamily. Expressed in roots, leaves, stems, buds and flowers.

Its subcellular location is the plastid. The protein localises to the chloroplast. It is found in the amyloplast. It catalyses the reaction [(1-&gt;4)-alpha-D-glucosyl](n) + ADP-alpha-D-glucose = [(1-&gt;4)-alpha-D-glucosyl](n+1) + ADP + H(+). It functions in the pathway glycan biosynthesis; starch biosynthesis. Its function is as follows. Involved in the synthesis of short glycan chains within amylopectin in leaves. Is required to generate chains up to about a degree of polymerization of 10 (DP10). The chain is Starch synthase 1, chloroplastic/amyloplastic (SS1) from Arabidopsis thaliana (Mouse-ear cress).